The primary structure comprises 251 residues: tRNA pseudouridine synthase A 1 (251 aa).

Aspartate 52 acts as the Nucleophile in catalysis. Tyrosine 110 contributes to the substrate binding site.

This sequence belongs to the tRNA pseudouridine synthase TruA family. As to quaternary structure, homodimer.

It catalyses the reaction uridine(38/39/40) in tRNA = pseudouridine(38/39/40) in tRNA. In terms of biological role, formation of pseudouridine at positions 38, 39 and 40 in the anticodon stem and loop of transfer RNAs. The chain is tRNA pseudouridine synthase A 1 from Desulfotalea psychrophila (strain LSv54 / DSM 12343).